The following is a 552-amino-acid chain: Non-structural protein NS1 (552 aa).

The protein belongs to the orbivirus non-structural protein NS1 family.

The sequence is that of Non-structural protein NS1 (Segment-5) from Bluetongue virus 10 (isolate USA) (BTV 10).